The chain runs to 212 residues: Probable nicotinate-nucleotide adenylyltransferase (212 aa).

The protein belongs to the NadD family.

It carries out the reaction nicotinate beta-D-ribonucleotide + ATP + H(+) = deamido-NAD(+) + diphosphate. Its pathway is cofactor biosynthesis; NAD(+) biosynthesis; deamido-NAD(+) from nicotinate D-ribonucleotide: step 1/1. Functionally, catalyzes the reversible adenylation of nicotinate mononucleotide (NaMN) to nicotinic acid adenine dinucleotide (NaAD). The protein is Probable nicotinate-nucleotide adenylyltransferase of Shewanella sp. (strain MR-7).